The following is a 486-amino-acid chain: Palmitoyltransferase pfa5 (486 aa).

2 helical membrane-spanning segments follow: residues 12-32 and 54-74; these read AVAR…CYVI and VGAG…VIIT. Residues 94-130 form a disordered region; that stretch reads AADQQSTPAKRSKSRSRRKGHGHGHRKSKSDEVSDKP. A compositionally biased stretch (basic residues) spans 103 to 121; the sequence is KRSKSRSRRKGHGHGHRKS. The DHHC domain maps to 172-222; that stretch reads IYCSKCCHYKPDRTHHCREVDRCVRKMDHFCPWVGGVVSETSFKFFIQFVF. 2 consecutive transmembrane segments (helical) span residues 217 to 237 and 261 to 281; these read FIQF…VCAI and LVML…FNLT. 2 disordered regions span residues 326–357 and 433–486; these read PVPP…STDP and KDAA…TGTT. The segment covering 447 to 456 has biased composition (low complexity); the sequence is SSYNSSPSAP. Residues 460–480 are compositionally biased toward basic residues; that stretch reads RSKRKQKRGKHHHHHHHHRHS.

The protein belongs to the DHHC palmitoyltransferase family. PFA5 subfamily. Post-translationally, autopalmitoylated.

The protein localises to the membrane. It catalyses the reaction L-cysteinyl-[protein] + hexadecanoyl-CoA = S-hexadecanoyl-L-cysteinyl-[protein] + CoA. In Emericella nidulans (strain FGSC A4 / ATCC 38163 / CBS 112.46 / NRRL 194 / M139) (Aspergillus nidulans), this protein is Palmitoyltransferase pfa5 (pfa5).